The following is a 208-amino-acid chain: Negative modulator of initiation of replication (208 aa).

The tract at residues 115 to 116 (AV) is interaction with DNA.

This sequence belongs to the SeqA family. In terms of assembly, homodimer. Polymerizes to form helical filaments.

It localises to the cytoplasm. Functionally, negative regulator of replication initiation, which contributes to regulation of DNA replication and ensures that replication initiation occurs exactly once per chromosome per cell cycle. Binds to pairs of hemimethylated GATC sequences in the oriC region, thus preventing assembly of replication proteins and re-initiation at newly replicated origins. Repression is relieved when the region becomes fully methylated. In Shewanella frigidimarina (strain NCIMB 400), this protein is Negative modulator of initiation of replication.